A 546-amino-acid polypeptide reads, in one-letter code: Glucose-6-phosphate isomerase (546 aa).

Catalysis depends on Glu-353, which acts as the Proton donor. Residues His-384 and Lys-512 contribute to the active site.

The protein belongs to the GPI family.

Its subcellular location is the cytoplasm. The catalysed reaction is alpha-D-glucose 6-phosphate = beta-D-fructose 6-phosphate. It participates in carbohydrate biosynthesis; gluconeogenesis. It functions in the pathway carbohydrate degradation; glycolysis; D-glyceraldehyde 3-phosphate and glycerone phosphate from D-glucose: step 2/4. In terms of biological role, catalyzes the reversible isomerization of glucose-6-phosphate to fructose-6-phosphate. The polypeptide is Glucose-6-phosphate isomerase (Actinobacillus pleuropneumoniae serotype 3 (strain JL03)).